The following is a 567-amino-acid chain: MSGVNNTSANELSTTMSNSNSAVGAPSVKTEHGDSKNSLNLDANEPPIDLPQKPLSAYTTVAILCLMIAFGGFIFGWDTGTISGFVNLSDFIRRFGQKNDKGTYYLSKVRMGLIVSIFNIGCAIGGIVLSKVGDIYGRRIGLITVTAIYVVGILIQITSINKWYQYFIGRIISGLGVGGIAVLSPMLISEVAPKHIRGTLVQLYQLMGTMGIFLGYCTNYGTKNYHNATQWRVGLGLCFAWATFMVSGMMFVPESPRYLIEVGKDEEAKRSLSKSNKVSVDDPALLVEYDTIKAGIELEKLAGNASWSELLSTKTKVFQRVLMGVMIQSLQQLTGDNYFFYYGTTIFKSVGLKDSFQTSIIIGVVNFFSSFIAVYTIERFGRRTCLLWGAASMLCCFAVFASVGVTKLWPQGSSHQDITSQGAGNCMIVFTMFFIFSFATTWAGGCYVIVSETFPLRVKSRGMAIATAANWMWGFLISFFTPFITGAINFYYGYVFLGCLVFAYFYVFFFVPETKGLTLEEVNTMWLEGVPAWKSASWVPPERRTADYDADAIDHDNRPIYKRFFSS.

Residues 1-22 show a composition bias toward polar residues; it reads MSGVNNTSANELSTTMSNSNSA. Positions 1–45 are disordered; sequence MSGVNNTSANELSTTMSNSNSAVGAPSVKTEHGDSKNSLNLDANE. Over 1-56 the chain is Cytoplasmic; sequence MSGVNNTSANELSTTMSNSNSAVGAPSVKTEHGDSKNSLNLDANEPPIDLPQKPLS. A helical membrane pass occupies residues 57–77; it reads AYTTVAILCLMIAFGGFIFGW. Topologically, residues 78-112 are extracellular; it reads DTGTISGFVNLSDFIRRFGQKNDKGTYYLSKVRMG. N-linked (GlcNAc...) asparagine glycosylation occurs at asparagine 87. The chain crosses the membrane as a helical span at residues 113–133; sequence LIVSIFNIGCAIGGIVLSKVG. The Cytoplasmic portion of the chain corresponds to 134–139; the sequence is DIYGRR. Residues 140 to 160 form a helical membrane-spanning segment; it reads IGLITVTAIYVVGILIQITSI. Residues 161-170 lie on the Extracellular side of the membrane; it reads NKWYQYFIGR. The chain crosses the membrane as a helical span at residues 171–191; the sequence is IISGLGVGGIAVLSPMLISEV. Over 192–197 the chain is Cytoplasmic; sequence APKHIR. The helical transmembrane segment at 198–218 threads the bilayer; the sequence is GTLVQLYQLMGTMGIFLGYCT. The Extracellular segment spans residues 219–232; the sequence is NYGTKNYHNATQWR. A glycan (N-linked (GlcNAc...) asparagine) is linked at asparagine 227. Residues 233 to 253 form a helical membrane-spanning segment; sequence VGLGLCFAWATFMVSGMMFVP. Over 254-336 the chain is Cytoplasmic; sequence ESPRYLIEVG…IQSLQQLTGD (83 aa). The chain crosses the membrane as a helical span at residues 337-353; sequence NYFFYYGTTIFKSVGLK. Residues 354–359 are Extracellular-facing; it reads DSFQTS. The chain crosses the membrane as a helical span at residues 360-377; that stretch reads IIIGVVNFFSSFIAVYTI. Residues 378–384 lie on the Cytoplasmic side of the membrane; the sequence is ERFGRRT. The chain crosses the membrane as a helical span at residues 385 to 405; sequence CLLWGAASMLCCFAVFASVGV. Over 406 to 429 the chain is Extracellular; it reads TKLWPQGSSHQDITSQGAGNCMIV. A helical membrane pass occupies residues 430-450; sequence FTMFFIFSFATTWAGGCYVIV. The Cytoplasmic portion of the chain corresponds to 451–467; that stretch reads SETFPLRVKSRGMAIAT. A helical membrane pass occupies residues 468-488; that stretch reads AANWMWGFLISFFTPFITGAI. Residue asparagine 489 is a topological domain, extracellular. The chain crosses the membrane as a helical span at residues 490–510; that stretch reads FYYGYVFLGCLVFAYFYVFFF. Residues 511–567 are Cytoplasmic-facing; it reads VPETKGLTLEEVNTMWLEGVPAWKSASWVPPERRTADYDADAIDHDNRPIYKRFFSS.

It belongs to the major facilitator superfamily. Sugar transporter (TC 2.A.1.1) family.

It localises to the membrane. Its function is as follows. Probable glucose transporter. The sequence is that of Hexose transporter HXT11 (HXT11) from Saccharomyces cerevisiae (strain ATCC 204508 / S288c) (Baker's yeast).